A 487-amino-acid polypeptide reads, in one-letter code: Citrate/succinate antiporter (487 aa).

14 consecutive transmembrane segments (helical) span residues 11 to 31, 60 to 80, 95 to 115, 138 to 158, 190 to 210, 214 to 234, 237 to 257, 288 to 308, 309 to 329, 345 to 365, 379 to 399, 401 to 421, 424 to 444, and 463 to 483; these read LLAP…DGMP, FIAV…AKEL, GLAG…IFAL, TLTL…FTPS, IGGY…SMFV, APNV…ISWL, FLCF…LSYV, WTLI…SEVI, NATA…VVPW, LATL…DWFA, ATVI…ASLS, HTAT…GVPM, LCIL…YATG, and LGAI…WPIL.

The protein belongs to the SLC13A/DASS transporter (TC 2.A.47) family. DIT1 subfamily.

The protein localises to the cell inner membrane. Functionally, responsible for the uptake of citrate in exchange to the efflux of succinate. Has a relatively broad specificity for C(4)-dicarboxylates and tricarboxylates. The chain is Citrate/succinate antiporter (citT) from Escherichia coli O157:H7.